The chain runs to 186 residues: Lipid A palmitoyltransferase PagP (186 aa).

The first 25 residues, 1–25, serve as a signal peptide directing secretion; the sequence is MNVSKYVAIFSFVFIQLISVGKVFA. Residues H58, D101, and S102 contribute to the active site.

It belongs to the lipid A palmitoyltransferase family. In terms of assembly, homodimer.

The protein resides in the cell outer membrane. It catalyses the reaction lipid A (E. coli) + a 1-hexadecanoyl-2-acyl-sn-glycero-3-phosphocholine = hepta-acyl lipid A (E. coli) + a 2-acyl-sn-glycero-3-phosphocholine. It carries out the reaction lipid IIA + a 1-hexadecanoyl-2-acyl-sn-glycero-3-phosphocholine = lipid IIB + a 2-acyl-sn-glycero-3-phosphocholine. The catalysed reaction is lipid IVA (E. coli) + a 1-hexadecanoyl-2-acyl-sn-glycero-3-phosphocholine = lipid IVB (E. coli) + a 2-acyl-sn-glycero-3-phosphocholine. Its function is as follows. Transfers a palmitate residue from the sn-1 position of a phospholipid to the N-linked hydroxymyristate on the proximal unit of lipid A or its precursors. The sequence is that of Lipid A palmitoyltransferase PagP from Escherichia coli (strain ATCC 55124 / KO11FL).